Reading from the N-terminus, the 114-residue chain is Histone H3-3 (114 aa).

The segment covering 1-17 (NTGGKAPRKHIAHKQAK) has biased composition (basic residues). Residues 1–32 (NTGGKAPRKHIAHKQAKKSSAAAATGGVKKPH) are disordered. Low complexity predominate over residues 18-28 (KSSAAAATGGV).

It belongs to the histone H3 family. The nucleosome is a histone octamer containing two molecules each of H2A, H2B, H3 and H4 assembled in one H3-H4 heterotetramer and two H2A-H2B heterodimers. The octamer wraps approximately 147 bp of DNA.

The protein resides in the nucleus. Its subcellular location is the chromosome. Functionally, core component of nucleosome. Nucleosomes wrap and compact DNA into chromatin, limiting DNA accessibility to the cellular machineries which require DNA as a template. Histones thereby play a central role in transcription regulation, DNA repair, DNA replication and chromosomal stability. DNA accessibility is regulated via a complex set of post-translational modifications of histones, also called histone code, and nucleosome remodeling. This chain is Histone H3-3 (H3-3), found in Stylonychia lemnae (Ciliate).